The sequence spans 91 residues: CRISPR-associated endoribonuclease Cas2 2 (91 aa).

D6 serves as a coordination point for Mg(2+).

The protein belongs to the CRISPR-associated endoribonuclease Cas2 protein family. Homodimer, forms a heterotetramer with a Cas1 homodimer. The cofactor is Mg(2+).

Its function is as follows. CRISPR (clustered regularly interspaced short palindromic repeat), is an adaptive immune system that provides protection against mobile genetic elements (viruses, transposable elements and conjugative plasmids). CRISPR clusters contain sequences complementary to antecedent mobile elements and target invading nucleic acids. CRISPR clusters are transcribed and processed into CRISPR RNA (crRNA). Functions as a ssRNA-specific endoribonuclease. Involved in the integration of spacer DNA into the CRISPR cassette. This chain is CRISPR-associated endoribonuclease Cas2 2, found in Moorella thermoacetica (strain ATCC 39073 / JCM 9320).